Here is a 56-residue protein sequence, read N- to C-terminus: Endoglucanase Cel5A (56 aa).

Glutamate 45 functions as the Nucleophile in the catalytic mechanism.

The protein belongs to the glycosyl hydrolase 5 (cellulase A) family.

The protein resides in the secreted. Its subcellular location is the extracellular space. It carries out the reaction Endohydrolysis of (1-&gt;4)-beta-D-glucosidic linkages in cellulose, lichenin and cereal beta-D-glucans.. In terms of biological role, has avicelase and carboxymethylcellulase activity. This is Endoglucanase Cel5A from Gloeophyllum trabeum (Brown rot fungus).